Here is a 347-residue protein sequence, read N- to C-terminus: NADH-ubiquinone oxidoreductase chain 2 (347 aa).

Transmembrane regions (helical) follow at residues 3–23 (PMTF…VLLS), 25–45 (HWFM…PVLM), 59–79 (YFLT…INTM), 96–116 (ILIT…FWVP), 127–147 (GLIL…QIYP), 149–169 (LNTN…GWGG), 178–198 (IMAY…TYNP), 201–221 (SLLN…LLII), 239–259 (IVTT…PLTG), 274–294 (NSLI…FFYM), and 326–346 (TAPL…LITL).

It belongs to the complex I subunit 2 family. As to quaternary structure, core subunit of respiratory chain NADH dehydrogenase (Complex I) which is composed of 45 different subunits. Interacts with TMEM242.

It is found in the mitochondrion inner membrane. The enzyme catalyses a ubiquinone + NADH + 5 H(+)(in) = a ubiquinol + NAD(+) + 4 H(+)(out). In terms of biological role, core subunit of the mitochondrial membrane respiratory chain NADH dehydrogenase (Complex I) which catalyzes electron transfer from NADH through the respiratory chain, using ubiquinone as an electron acceptor. Essential for the catalytic activity and assembly of complex I. This Sylvisorex ollula (Greater forest shrew) protein is NADH-ubiquinone oxidoreductase chain 2.